The sequence spans 88 residues: HssA/B-like protein 11 (88 aa).

The protein belongs to the hssA/B family.

The polypeptide is HssA/B-like protein 11 (hssl11) (Dictyostelium discoideum (Social amoeba)).